Here is a 182-residue protein sequence, read N- to C-terminus: Plasmolipin (182 aa).

Residues 1 to 35 are Cytoplasmic-facing; sequence MAEFPSKVSTRTSSPAQGVGASVSALRPDLGFVRS. Ser-9 bears the Phosphoserine mark. The region spanning 32–166 is the MARVEL domain; that stretch reads FVRSALGVLA…SAFFSFQAWR (135 aa). The helical transmembrane segment at 36–56 threads the bilayer; the sequence is ALGVLALLQLALGLLVWALIA. Residues 57–68 lie on the Extracellular side of the membrane; sequence DTPYHLYPAYGW. Residues 69 to 89 form a helical membrane-spanning segment; that stretch reads VMFVAVFLWLVTIVFFIIYLF. Topologically, residues 90 to 99 are cytoplasmic; it reads QLHMKLYMVP. The helical transmembrane segment at 100–120 threads the bilayer; the sequence is WPLVLLIFFVAATVLYITAFI. The Extracellular portion of the chain corresponds to 121–141; that stretch reads ACAAAVDLTSLRGSRPYNQRS. Residues 142-162 traverse the membrane as a helical segment; it reads AASFFACLVMIAYGVSAFFSF. The Cytoplasmic portion of the chain corresponds to 163–182; sequence QAWRGVGSNAATSQMAGGYS.

Belongs to the MAL family. Forms oligomers. Post-translationally, phosphorylated.

Its subcellular location is the membrane. The protein localises to the cell membrane. It is found in the myelin membrane. The protein resides in the apical cell membrane. Functionally, main component of the myelin sheath that plays an important role in myelin membrane biogenesis and myelination. Plays an essential function in apical endocytosis. Regulates epithelial development through the regulation of apical endocytosis. Part of the intracellular machinery that mediates basolateral-to-apical transport of ICAM-1, an essential adhesion receptor in epithelial cells, from the subapical compartment in hepatic epithelial cells. This chain is Plasmolipin (Pllp), found in Mus musculus (Mouse).